The primary structure comprises 194 residues: MEEKLKKAKIIFVVGGPGSGKGTQCEKIVHKYGYTHLSTGDLLRAEVSSGSARGKKLSEIMEKGQLVPLETVLDMLRDAMVAKADTSKGFLIDGYPRQVQQGEEFERRIAQPTLLLYVDAGPETMQKRLLKRGETSGRVDDNEETIKKRLETYYKATEPVIAFYEKRGIVRKVNAEGSVDNVFSQVCTHLDALK.

Position 1 is an N-acetylmethionine (methionine 1). 18–23 (GSGKGT) contributes to the ATP binding site. Phosphoserine is present on serine 38. Residues 38-67 (STGDLLRAEVSSGSARGKKLSEIMEKGQLV) are NMP. Residues threonine 39, arginine 44, 65-67 (QLV), 94-97 (GYPR), and glutamine 101 contribute to the AMP site. The LID stretch occupies residues 131–141 (KRGETSGRVDD). Arginine 132 is a binding site for ATP. The AMP site is built by arginine 138 and arginine 149. Residue glycine 177 participates in ATP binding.

It belongs to the adenylate kinase family. AK1 subfamily. Monomer. Requires Mg(2+) as cofactor.

The protein localises to the cytoplasm. It catalyses the reaction a ribonucleoside 5'-phosphate + ATP = a ribonucleoside 5'-diphosphate + ADP. The enzyme catalyses AMP + ATP = 2 ADP. The catalysed reaction is dAMP + ATP = dADP + ADP. It carries out the reaction dATP + AMP = dADP + ADP. It catalyses the reaction dAMP + dATP = 2 dADP. The enzyme catalyses a 2'-deoxyribonucleoside 5'-diphosphate + ATP = a 2'-deoxyribonucleoside 5'-triphosphate + ADP. The catalysed reaction is a ribonucleoside 5'-diphosphate + ATP = a ribonucleoside 5'-triphosphate + ADP. It carries out the reaction CDP + GTP = CTP + GDP. It catalyses the reaction GDP + ATP = GTP + ADP. The enzyme catalyses UDP + ATP = UTP + ADP. The catalysed reaction is GTP + UDP = UTP + GDP. It carries out the reaction dTDP + GTP = dTTP + GDP. It catalyses the reaction dCDP + GTP = dCTP + GDP. The enzyme catalyses dGDP + ATP = dGTP + ADP. The catalysed reaction is dADP + GTP = dATP + GDP. It carries out the reaction thiamine diphosphate + ADP = thiamine triphosphate + AMP. Its function is as follows. Catalyzes the reversible transfer of the terminal phosphate group between ATP and AMP. Also displays broad nucleoside diphosphate kinase activity. Plays an important role in cellular energy homeostasis and in adenine nucleotide metabolism. Also catalyzes at a very low rate the synthesis of thiamine triphosphate (ThTP) from thiamine diphosphate (ThDP) and ADP. In Oryctolagus cuniculus (Rabbit), this protein is Adenylate kinase isoenzyme 1.